The following is a 119-amino-acid chain: Nascent polypeptide-associated complex protein (119 aa).

The 69-residue stretch at 5 to 73 (RMNSREMRRL…FRETPKKQEG (69 aa)) folds into the NAC-A/B domain.

The protein belongs to the NAC-alpha family. In terms of assembly, homodimer. Interacts with the ribosome. Binds ribosomal RNA.

Functionally, contacts the emerging nascent chain on the ribosome. In Thermoplasma volcanium (strain ATCC 51530 / DSM 4299 / JCM 9571 / NBRC 15438 / GSS1), this protein is Nascent polypeptide-associated complex protein.